Consider the following 293-residue polypeptide: Probable endonuclease 4 (293 aa).

Positions 78, 118, 154, 188, 191, 225, 238, 240, and 270 each coordinate Zn(2+).

Belongs to the AP endonuclease 2 family. Zn(2+) is required as a cofactor.

The enzyme catalyses Endonucleolytic cleavage to 5'-phosphooligonucleotide end-products.. Functionally, endonuclease IV plays a role in DNA repair. It cleaves phosphodiester bonds at apurinic or apyrimidinic (AP) sites, generating a 3'-hydroxyl group and a 5'-terminal sugar phosphate. The protein is Probable endonuclease 4 of Vibrio vulnificus (strain YJ016).